The following is a 713-amino-acid chain: Phosphoribosylformylglycinamidine synthase subunit PurL (713 aa).

His32 is an active-site residue. Residue Tyr35 coordinates ATP. Residue Glu76 participates in Mg(2+) binding. Substrate is bound by residues 77–80 and Arg99; that span reads SHNH. Residue His78 is the Proton acceptor of the active site. Residue Asp100 coordinates Mg(2+). Gln224 contributes to the substrate binding site. Residue Asp252 coordinates Mg(2+). 296–298 provides a ligand contact to substrate; the sequence is ESQ. 2 residues coordinate ATP: Asp471 and Gly508. Asn509 provides a ligand contact to Mg(2+). Residue Ser511 participates in substrate binding.

The protein belongs to the FGAMS family. Monomer. Part of the FGAM synthase complex composed of 1 PurL, 1 PurQ and 2 PurS subunits.

It is found in the cytoplasm. It carries out the reaction N(2)-formyl-N(1)-(5-phospho-beta-D-ribosyl)glycinamide + L-glutamine + ATP + H2O = 2-formamido-N(1)-(5-O-phospho-beta-D-ribosyl)acetamidine + L-glutamate + ADP + phosphate + H(+). It participates in purine metabolism; IMP biosynthesis via de novo pathway; 5-amino-1-(5-phospho-D-ribosyl)imidazole from N(2)-formyl-N(1)-(5-phospho-D-ribosyl)glycinamide: step 1/2. Functionally, part of the phosphoribosylformylglycinamidine synthase complex involved in the purines biosynthetic pathway. Catalyzes the ATP-dependent conversion of formylglycinamide ribonucleotide (FGAR) and glutamine to yield formylglycinamidine ribonucleotide (FGAM) and glutamate. The FGAM synthase complex is composed of three subunits. PurQ produces an ammonia molecule by converting glutamine to glutamate. PurL transfers the ammonia molecule to FGAR to form FGAM in an ATP-dependent manner. PurS interacts with PurQ and PurL and is thought to assist in the transfer of the ammonia molecule from PurQ to PurL. This is Phosphoribosylformylglycinamidine synthase subunit PurL from Thermococcus sibiricus (strain DSM 12597 / MM 739).